We begin with the raw amino-acid sequence, 591 residues long: Aspartate--tRNA(Asp/Asn) ligase (591 aa).

Glu-174 contacts L-aspartate. An aspartate region spans residues 198 to 201 (QLFK). L-aspartate is bound at residue Arg-220. ATP-binding positions include 220–222 (RDE) and Gln-229. L-aspartate is bound at residue His-450. Glu-483 lines the ATP pocket. Arg-490 contributes to the L-aspartate binding site. ATP is bound at residue 535-538 (GLDR).

This sequence belongs to the class-II aminoacyl-tRNA synthetase family. Type 1 subfamily. In terms of assembly, homodimer.

It localises to the cytoplasm. The enzyme catalyses tRNA(Asx) + L-aspartate + ATP = L-aspartyl-tRNA(Asx) + AMP + diphosphate. In terms of biological role, aspartyl-tRNA synthetase with relaxed tRNA specificity since it is able to aspartylate not only its cognate tRNA(Asp) but also tRNA(Asn). Reaction proceeds in two steps: L-aspartate is first activated by ATP to form Asp-AMP and then transferred to the acceptor end of tRNA(Asp/Asn). This Pseudomonas putida (strain W619) protein is Aspartate--tRNA(Asp/Asn) ligase.